The sequence spans 89 residues: Small ribosomal subunit protein uS17 (89 aa).

Belongs to the universal ribosomal protein uS17 family. As to quaternary structure, part of the 30S ribosomal subunit.

Functionally, one of the primary rRNA binding proteins, it binds specifically to the 5'-end of 16S ribosomal RNA. The sequence is that of Small ribosomal subunit protein uS17 from Novosphingobium aromaticivorans (strain ATCC 700278 / DSM 12444 / CCUG 56034 / CIP 105152 / NBRC 16084 / F199).